The primary structure comprises 572 residues: Formate--tetrahydrofolate ligase (572 aa).

Residue 65 to 72 participates in ATP binding; sequence TPLGEGKT.

It belongs to the formate--tetrahydrofolate ligase family.

It catalyses the reaction (6S)-5,6,7,8-tetrahydrofolate + formate + ATP = (6R)-10-formyltetrahydrofolate + ADP + phosphate. Its pathway is one-carbon metabolism; tetrahydrofolate interconversion. This chain is Formate--tetrahydrofolate ligase, found in Chloroflexus aggregans (strain MD-66 / DSM 9485).